The primary structure comprises 57 residues: Small ribosomal subunit protein bS21 (57 aa).

The disordered stretch occupies residues 34-57; it reads RKEHYIKPSVQKKNRQKNMRSKKR. A compositionally biased stretch (basic residues) spans 43 to 57; sequence VQKKNRQKNMRSKKR.

Belongs to the bacterial ribosomal protein bS21 family.

The sequence is that of Small ribosomal subunit protein bS21 from Aster yellows witches'-broom phytoplasma (strain AYWB).